The sequence spans 334 residues: MTPLLLLAVLCLGTALATPKFDQTFNAQWHQWKSTHRRLYGTNEEEWRRAVWEKNMRMIQLHNGEYSNGKHGFTMEMNAFGDMTNEEFRQIVNGYRHQKHKKGRLFQEPLMLQIPKTVDWREKGCVTPVKNQGQCGSCWAFSASGCLEGQMFLKTGKLISLSEQNLVDCSHDQGNQGCNGGLMDFAFQYIKENGGLDSEESYPYEAKDGSCKYRAEYAVANDTGFVDIPQQEKALMKAVATVGPISVAMDASHPSLQFYSSGIYYEPNCSSKDLDHGVLVVGYGYEGTDSNKDKYWLVKNSWGKEWGMDGYIKIAKDRNNHCGLATAASYPIVN.

Positions 1–17 (MTPLLLLAVLCLGTALA) are cleaved as a signal peptide. Positions 18-113 (TPKFDQTFNA…RLFQEPLMLQ (96 aa)) are cleaved as a propeptide — activation peptide. Zn(2+) is bound at residue E122. Disulfide bonds link C135-C178 and C169-C211. The active site involves C138. Residues E163, D184, E199, E205, D227, D250, H253, D273, and D275 each contribute to the Zn(2+) site. The cysteines at positions 269 and 322 are disulfide-linked. H276 is a catalytic residue. A propeptide spanning residues 289–290 (DS) is cleaved from the precursor. N300 is an active-site residue.

This sequence belongs to the peptidase C1 family. As to quaternary structure, dimer of a heavy and a light chain linked by disulfide bonds. Interacts with Long isoform of CD74/Ii chain; the interaction stabilizes the conformation of mature CTSL. Post-translationally, during export along the endocytic pathway, pro-CTSL undergoes several proteolytic cleavages to generate the CTSL single-chain and two-chain mature forms, composed of a heavy chain linked to a light chain by disulfide bonds. Autocleavage; produces the single-chain CTSL after cleavage of the propeptide. The cleavage can be intermolecular. Both mature cathepsin L1 and procathepsin L are found in the upper epidermis. The lower epidermis predominantly contains procathepsin L. In seminiferous tubules expression is greater at stages VI-VII than at stages IX-XII.

It is found in the lysosome. It localises to the apical cell membrane. The protein localises to the cytoplasmic vesicle. Its subcellular location is the secretory vesicle. The protein resides in the chromaffin granule. It is found in the secreted. It localises to the extracellular space. It carries out the reaction Specificity close to that of papain. As compared to cathepsin B, cathepsin L exhibits higher activity toward protein substrates, but has little activity on Z-Arg-Arg-NHMec, and no peptidyl-dipeptidase activity.. With respect to regulation, inhibited by the propeptide produced by autocleavage. Long isoform of CD74/Ii chain stabilizes the conformation of mature CTSL by binding to its active site and serving as a chaperone to help maintain a pool of mature enzyme in endocytic compartments and extracellular space of APCs. IFNG enhances the conversion into the CTSL mature and active form. Inhibited by CST6. Inhibited by the glycopeptide antibiotic teicoplanin. Inhibited by amantadine. In terms of biological role, thiol protease important for the overall degradation of proteins in lysosomes. Plays a critical for normal cellular functions such as general protein turnover, antigen processing and bone remodeling. Involved in the solubilization of cross-linked TG/thyroglobulin and in the subsequent release of thyroid hormone thyroxine (T4) by limited proteolysis of TG/thyroglobulin in the thyroid follicle lumen. In neuroendocrine chromaffin cells secretory vesicles, catalyzes the prohormone proenkephalin processing to the active enkephalin peptide neurotransmitter. In thymus, regulates CD4(+) T cell positive selection by generating the major histocompatibility complex class II (MHCII) bound peptide ligands presented by cortical thymic epithelial cells. Also mediates invariant chain processing in cortical thymic epithelial cells. Major elastin-degrading enzyme at neutral pH. Accumulates as a mature and active enzyme in the extracellular space of antigen presenting cells (APCs) to regulate degradation of the extracellular matrix in the course of inflammation. Secreted form generates endostatin from COL18A1. Critical for cardiac morphology and function. Plays an important role in hair follicle morphogenesis and cycling, as well as epidermal differentiation. Required for maximal stimulation of steroidogenesis by TIMP1. In Rattus norvegicus (Rat), this protein is Procathepsin L.